A 106-amino-acid chain; its full sequence is Toxin-like structure LSTX-D9 (106 aa).

The signal sequence occupies residues 1–20 (MMKVLVVVALLLTLIIYSSS). Residues 21-41 (DGIDDLEADELVSLMAHEQTR) constitute a propeptide that is removed on maturation. 4 disulfide bridges follow: C45/C60, C52/C69, C59/C85, and C71/C83.

Belongs to the neurotoxin 19 (CSTX) family. 02 (D7) subfamily. Expressed by the venom gland.

The protein localises to the secreted. The chain is Toxin-like structure LSTX-D9 from Lycosa singoriensis (Wolf spider).